The chain runs to 336 residues: Dihydroorotate dehydrogenase (quinone) (336 aa).

FMN-binding positions include 62–66 and Thr86; that span reads AGLDK. Lys66 lines the substrate pocket. 111–115 is a binding site for substrate; that stretch reads NRMGF. Residues Asn139 and Asn172 each coordinate FMN. Substrate is bound at residue Asn172. The Nucleophile role is filled by Ser175. Asn177 is a binding site for substrate. FMN is bound by residues Lys217 and Thr245. 246-247 lines the substrate pocket; the sequence is NT. FMN contacts are provided by residues Gly268, Gly297, and 318–319; that span reads YS.

It belongs to the dihydroorotate dehydrogenase family. Type 2 subfamily. Monomer. The cofactor is FMN.

The protein localises to the cell membrane. It catalyses the reaction (S)-dihydroorotate + a quinone = orotate + a quinol. The protein operates within pyrimidine metabolism; UMP biosynthesis via de novo pathway; orotate from (S)-dihydroorotate (quinone route): step 1/1. In terms of biological role, catalyzes the conversion of dihydroorotate to orotate with quinone as electron acceptor. The chain is Dihydroorotate dehydrogenase (quinone) from Cronobacter sakazakii (strain ATCC BAA-894) (Enterobacter sakazakii).